The primary structure comprises 225 residues: 2-C-methyl-D-erythritol 4-phosphate cytidylyltransferase (225 aa).

It belongs to the IspD/TarI cytidylyltransferase family. IspD subfamily.

It carries out the reaction 2-C-methyl-D-erythritol 4-phosphate + CTP + H(+) = 4-CDP-2-C-methyl-D-erythritol + diphosphate. It participates in isoprenoid biosynthesis; isopentenyl diphosphate biosynthesis via DXP pathway; isopentenyl diphosphate from 1-deoxy-D-xylulose 5-phosphate: step 2/6. Its function is as follows. Catalyzes the formation of 4-diphosphocytidyl-2-C-methyl-D-erythritol from CTP and 2-C-methyl-D-erythritol 4-phosphate (MEP). The polypeptide is 2-C-methyl-D-erythritol 4-phosphate cytidylyltransferase (Haemophilus influenzae (strain PittEE)).